Here is a 359-residue protein sequence, read N- to C-terminus: tRNA-specific 2-thiouridylase MnmA (359 aa).

ATP contacts are provided by residues 6–13 and leucine 32; that span reads AMSGGVDS. Cysteine 97 (nucleophile) is an active-site residue. Cysteine 97 and cysteine 195 are disulfide-bonded. Glycine 121 contacts ATP. An interaction with tRNA region spans residues 144-146; that stretch reads KDQ. Cysteine 195 (cysteine persulfide intermediate) is an active-site residue.

This sequence belongs to the MnmA/TRMU family.

It is found in the cytoplasm. The catalysed reaction is S-sulfanyl-L-cysteinyl-[protein] + uridine(34) in tRNA + AH2 + ATP = 2-thiouridine(34) in tRNA + L-cysteinyl-[protein] + A + AMP + diphosphate + H(+). Catalyzes the 2-thiolation of uridine at the wobble position (U34) of tRNA, leading to the formation of s(2)U34. The polypeptide is tRNA-specific 2-thiouridylase MnmA (Tropheryma whipplei (strain Twist) (Whipple's bacillus)).